The following is an 88-amino-acid chain: UPF0367 protein Tery_1229 (88 aa).

Belongs to the UPF0367 family.

The polypeptide is UPF0367 protein Tery_1229 (Trichodesmium erythraeum (strain IMS101)).